Here is a 212-residue protein sequence, read N- to C-terminus: Probable transaldolase (212 aa).

Catalysis depends on Lys-84, which acts as the Schiff-base intermediate with substrate.

Belongs to the transaldolase family. Type 3B subfamily.

It localises to the cytoplasm. It catalyses the reaction D-sedoheptulose 7-phosphate + D-glyceraldehyde 3-phosphate = D-erythrose 4-phosphate + beta-D-fructose 6-phosphate. It participates in carbohydrate degradation; pentose phosphate pathway; D-glyceraldehyde 3-phosphate and beta-D-fructose 6-phosphate from D-ribose 5-phosphate and D-xylulose 5-phosphate (non-oxidative stage): step 2/3. In terms of biological role, transaldolase is important for the balance of metabolites in the pentose-phosphate pathway. This Bacillus pumilus (strain SAFR-032) protein is Probable transaldolase.